We begin with the raw amino-acid sequence, 436 residues long: Serine/threonine-protein kinase STK11 (436 aa).

At serine 31 the chain carries Phosphoserine. N6-acetyllysine occurs at positions 44 and 48. The interval 45-90 (LIGKYLMGDLLGEGSYGKVKEVLDSETLCRRAVKILKKKKLRRIPN) is sufficient for interaction with SIRT1. In terms of domain architecture, Protein kinase spans 49 to 309 (YLMGDLLGEG…IRQIRQHSWF (261 aa)). Residues 55–63 (LGEGSYGKV) and lysine 78 contribute to the ATP site. Lysine 96 and lysine 97 each carry N6-acetyllysine. Catalysis depends on aspartate 176, which acts as the Proton acceptor. A Phosphothreonine; by autocatalysis modification is found at threonine 189. Residues lysine 296 and lysine 311 each carry the N6-acetyllysine modification. Serine 325 carries the post-translational modification Phosphoserine. A Phosphothreonine; by autocatalysis modification is found at threonine 336. At threonine 366 the chain carries Phosphothreonine; by ATM and autocatalysis. Positions 397 to 421 (GTEPQLSSKVKPEGRPGAANPARKV) are disordered. At serine 403 the chain carries Phosphoserine. Position 420 is an N6-acetyllysine (lysine 420). Cysteine 422 carries S-palmitoyl cysteine lipidation. Position 426 is an N6-acetyllysine (lysine 426). Serine 431 carries the post-translational modification Phosphoserine; by autocatalysis, PKA, PKC/PRKCZ and RPS6KA1. Residue cysteine 433 is modified to Cysteine methyl ester. Cysteine 433 carries S-farnesyl cysteine lipidation. An N6-acetyllysine modification is found at lysine 434. Positions 434 to 436 (KQQ) are cleaved as a propeptide — removed in mature form.

The protein belongs to the protein kinase superfamily. CAMK Ser/Thr protein kinase family. LKB1 subfamily. In terms of assembly, catalytic component of a trimeric complex composed of STK11/LKB1, STRAD (STRADA or STRADB) and CAB39/MO25 (CAB39/MO25alpha or CAB39L/MO25beta): the complex tethers STK11/LKB1 in the cytoplasm and stimulates its catalytic activity. Found in a ternary complex composed of SMAD4, STK11/LKB1 and STK11IP. Interacts with NR4A1, p53/TP53, SMAD4, STK11IP and WDR6. Interacts with NISCH; this interaction may increase STK11 activity. Interacts with SIRT1; the interaction deacetylates STK11. Interacts with CDKN1A. Mg(2+) serves as cofactor. The cofactor is Mn(2+). In terms of processing, phosphorylated by ATM at Thr-366 following ionizing radiation (IR). Phosphorylation at Ser-431 by RPS6KA1 and/or some PKA is required to inhibit cell growth. Phosphorylation at Ser-431 is also required during neuronal polarization to mediate phosphorylation of BRSK1 and BRSK2. Phosphorylation by PKC/PRKCZ at Ser-397 in isoform 2 promotes metformin (or peroxynitrite)-induced nuclear export of STK11 and activation of AMPK. UV radiation -induced phosphorylation at Thr-366 mediates CDKN1A degradation. Post-translationally, acetylated. Deacetylation at Lys-48 enhances cytoplasmic localization and kinase activity in vitro. Expressed in brain, heart, testis, skeletal muscle and spleen, and weakly in liver and kidney. Isoform 1 is expressed at highest levels in the brain. Isoform 2 is expressed at highest levels in the testis, primarily in postmitotic developing germ cells (at protein level).

It is found in the nucleus. The protein resides in the cytoplasm. Its subcellular location is the membrane. The protein localises to the mitochondrion. The enzyme catalyses L-seryl-[protein] + ATP = O-phospho-L-seryl-[protein] + ADP + H(+). The catalysed reaction is L-threonyl-[protein] + ATP = O-phospho-L-threonyl-[protein] + ADP + H(+). Its activity is regulated as follows. Activated by forming a complex with STRAD (STRADA or STRADB) and CAB39/MO25 (CAB39/MO25alpha or CAB39L/MO25beta): STRADA (or STRADB)-binding promotes a conformational change of STK11/LKB1 in an active conformation, which is stabilized by CAB39/MO25alpha (or CAB39L/MO25beta) interacting with the STK11/LKB1 activation loop. Sequestration in the nucleus by NR4A1 prevents it from phosphorylating and activating cytoplasmic AMPK. Functionally, tumor suppressor serine/threonine-protein kinase that controls the activity of AMP-activated protein kinase (AMPK) family members, thereby playing a role in various processes such as cell metabolism, cell polarity, apoptosis and DNA damage response. Acts by phosphorylating the T-loop of AMPK family proteins, thus promoting their activity: phosphorylates PRKAA1, PRKAA2, BRSK1, BRSK2, MARK1, MARK2, MARK3, MARK4, NUAK1, NUAK2, SIK1, SIK2, SIK3 and SNRK but not MELK. Also phosphorylates non-AMPK family proteins such as STRADA, PTEN and possibly p53/TP53. Acts as a key upstream regulator of AMPK by mediating phosphorylation and activation of AMPK catalytic subunits PRKAA1 and PRKAA2 and thereby regulates processes including: inhibition of signaling pathways that promote cell growth and proliferation when energy levels are low, glucose homeostasis in liver, activation of autophagy when cells undergo nutrient deprivation, and B-cell differentiation in the germinal center in response to DNA damage. Also acts as a regulator of cellular polarity by remodeling the actin cytoskeleton. Required for cortical neuron polarization by mediating phosphorylation and activation of BRSK1 and BRSK2, leading to axon initiation and specification. Involved in DNA damage response: interacts with p53/TP53 and recruited to the CDKN1A/WAF1 promoter to participate in transcription activation. Able to phosphorylate p53/TP53; the relevance of such result in vivo is however unclear and phosphorylation may be indirect and mediated by downstream STK11/LKB1 kinase NUAK1. Also acts as a mediator of p53/TP53-dependent apoptosis via interaction with p53/TP53: translocates to the mitochondrion during apoptosis and regulates p53/TP53-dependent apoptosis pathways. Regulates UV radiation-induced DNA damage response mediated by CDKN1A. In association with NUAK1, phosphorylates CDKN1A in response to UV radiation and contributes to its degradation which is necessary for optimal DNA repair. Has a role in spermiogenesis. This is Serine/threonine-protein kinase STK11 from Rattus norvegicus (Rat).